The primary structure comprises 244 residues: tRNA (guanine-N(1)-)-methyltransferase (244 aa).

S-adenosyl-L-methionine-binding positions include glycine 113 and 132–137 (IGDYVL).

Belongs to the RNA methyltransferase TrmD family. As to quaternary structure, homodimer.

It localises to the cytoplasm. It catalyses the reaction guanosine(37) in tRNA + S-adenosyl-L-methionine = N(1)-methylguanosine(37) in tRNA + S-adenosyl-L-homocysteine + H(+). Specifically methylates guanosine-37 in various tRNAs. This chain is tRNA (guanine-N(1)-)-methyltransferase, found in Shouchella clausii (strain KSM-K16) (Alkalihalobacillus clausii).